A 188-amino-acid chain; its full sequence is Large ribosomal subunit protein uL6 (188 aa).

The protein belongs to the universal ribosomal protein uL6 family. Part of the 50S ribosomal subunit.

Its function is as follows. This protein binds to the 23S rRNA, and is important in its secondary structure. It is located near the subunit interface in the base of the L7/L12 stalk, and near the tRNA binding site of the peptidyltransferase center. The sequence is that of Large ribosomal subunit protein uL6 from Myxococcus xanthus (strain DK1622).